Reading from the N-terminus, the 469-residue chain is Uronate isomerase (469 aa).

It belongs to the metallo-dependent hydrolases superfamily. Uronate isomerase family.

It carries out the reaction D-glucuronate = D-fructuronate. The catalysed reaction is aldehydo-D-galacturonate = keto-D-tagaturonate. Its pathway is carbohydrate metabolism; pentose and glucuronate interconversion. The polypeptide is Uronate isomerase (Corynebacterium efficiens (strain DSM 44549 / YS-314 / AJ 12310 / JCM 11189 / NBRC 100395)).